The primary structure comprises 152 residues: Snaclec coagulation factor IX/factor X-binding protein subunit A (152 aa).

The signal sequence occupies residues M1 to A23. In terms of domain architecture, C-type lectin spans D24–A152. 3 disulfides stabilise this stretch: C25–C36, C53–C150, and C125–C142. Positions 64, 66, and 70 each coordinate Ca(2+). Ca(2+) is bound at residue E151.

The protein belongs to the snaclec family. In terms of assembly, heterodimer of subunits A and B; disulfide-linked. In terms of tissue distribution, expressed by the venom gland.

It is found in the secreted. Anticoagulant protein which binds to the gamma-carboxyglutamic acid-domain regions of factors IX (F9) and factor X (F10) in the presence of calcium with a 1 to 1 stoichiometry. The chain is Snaclec coagulation factor IX/factor X-binding protein subunit A from Protobothrops flavoviridis (Habu).